Here is a 275-residue protein sequence, read N- to C-terminus: Diaminopimelate epimerase (275 aa).

Substrate is bound by residues asparagine 12, glutamine 45, and asparagine 65. Cysteine 74 serves as the catalytic Proton donor. Substrate contacts are provided by residues 75-76 (GN), asparagine 158, asparagine 191, and 209-210 (ER). Cysteine 218 acts as the Proton acceptor in catalysis. 219–220 (GT) is a binding site for substrate.

Belongs to the diaminopimelate epimerase family. As to quaternary structure, homodimer.

It is found in the cytoplasm. The enzyme catalyses (2S,6S)-2,6-diaminopimelate = meso-2,6-diaminopimelate. It participates in amino-acid biosynthesis; L-lysine biosynthesis via DAP pathway; DL-2,6-diaminopimelate from LL-2,6-diaminopimelate: step 1/1. In terms of biological role, catalyzes the stereoinversion of LL-2,6-diaminopimelate (L,L-DAP) to meso-diaminopimelate (meso-DAP), a precursor of L-lysine and an essential component of the bacterial peptidoglycan. The protein is Diaminopimelate epimerase of Shewanella putrefaciens (strain CN-32 / ATCC BAA-453).